A 345-amino-acid chain; its full sequence is Isocitrate/homoisocitrate dehydrogenase (345 aa).

NADH is bound at residue 69–71; that stretch reads TTT. The (2R,3S)-homoisocitrate site is built by R86, R96, R111, Y118, K163, and N165. Residue N165 participates in NADH binding. Mg(2+) is bound by residues D194, D218, and D222. NADH contacts are provided by residues 251–255 and N263; that span reads GSAPD.

This sequence belongs to the isocitrate and isopropylmalate dehydrogenases family. Mn(2+) serves as cofactor. Requires Mg(2+) as cofactor.

It carries out the reaction D-threo-isocitrate + NAD(+) = 2-oxoglutarate + CO2 + NADH. The catalysed reaction is (2R,3S)-homoisocitrate + NAD(+) = 2-oxoadipate + CO2 + NADH. Its pathway is amino-acid biosynthesis; L-lysine biosynthesis via AAA pathway; L-alpha-aminoadipate from 2-oxoglutarate: step 4/5. In terms of biological role, catalyzes the NAD(+)-dependent oxidative decarboxylation of homoisocitrate to 2-oxoadipate (alpha-ketoadipate), and of isocitrate to 2-oxoglutarate, at near equal efficiency. May thus play a dual role in glutamate and lysine biosynthesis in vivo. Preferentially uses NAD over NADP. The chain is Isocitrate/homoisocitrate dehydrogenase from Pyrococcus horikoshii (strain ATCC 700860 / DSM 12428 / JCM 9974 / NBRC 100139 / OT-3).